We begin with the raw amino-acid sequence, 411 residues long: Bifunctional protein GlmU (411 aa).

The segment at 1 to 204 (MDAVILCAGK…ENNIKGIKLN (204 aa)) is pyrophosphorylase. UTP contacts are provided by residues 6–9 (LCAG), Q74, and G79. T80, G132, E144, and N158 together coordinate N-acetyl-alpha-D-glucosamine 1-phosphate. Residues 205–224 (GYWNDIGKPWDLLDANTHIL) are linker. The segment at 225–411 (KNIKTDIKGK…EEIIIKTKRK (187 aa)) is N-acetyltransferase. Catalysis depends on H308, which acts as the Proton acceptor. The acetyl-CoA site is built by A384 and K401.

The protein in the N-terminal section; belongs to the N-acetylglucosamine-1-phosphate uridyltransferase family. In the C-terminal section; belongs to the transferase hexapeptide repeat family.

It catalyses the reaction N-acetyl-alpha-D-glucosamine 1-phosphate + UTP + H(+) = UDP-N-acetyl-alpha-D-glucosamine + diphosphate. The enzyme catalyses alpha-D-glucosamine 1-phosphate + acetyl-CoA = N-acetyl-alpha-D-glucosamine 1-phosphate + CoA + H(+). It participates in nucleotide-sugar biosynthesis; UDP-N-acetyl-alpha-D-glucosamine biosynthesis; N-acetyl-alpha-D-glucosamine 1-phosphate from alpha-D-glucosamine 6-phosphate (route II): step 2/2. The protein operates within nucleotide-sugar biosynthesis; UDP-N-acetyl-alpha-D-glucosamine biosynthesis; UDP-N-acetyl-alpha-D-glucosamine from N-acetyl-alpha-D-glucosamine 1-phosphate: step 1/1. In terms of biological role, catalyzes the last two sequential reactions in the de novo biosynthetic pathway for UDP-N-acetyl-glucosamine (UDP-GlcNAc). Responsible for the acetylation of GlcN-1-P to GlcNAc-1-P, and for the uridyl transfer from UTP to GlcNAc-1-P, to produce UDP-GlcNAc and pyrophosphate. The protein is Bifunctional protein GlmU of Methanococcus aeolicus (strain ATCC BAA-1280 / DSM 17508 / OCM 812 / Nankai-3).